The sequence spans 236 residues: Ribosome maturation protein SDO1 homolog (236 aa).

The protein belongs to the SDO1/SBDS family. Crystallized in association with 70S ribosomes.

The polypeptide is Ribosome maturation protein SDO1 homolog (Thermococcus kodakarensis (strain ATCC BAA-918 / JCM 12380 / KOD1) (Pyrococcus kodakaraensis (strain KOD1))).